A 446-amino-acid chain; its full sequence is Fatty acid desaturase 2 (446 aa).

Topologically, residues 1 to 132 are cytoplasmic; the sequence is MGMGGQSGEG…EDMRLFKSNP (132 aa). In terms of domain architecture, Cytochrome b5 heme-binding spans 20-97; that stretch reads EAQYSWEEIQ…LKPLYIGELA (78 aa). A helical transmembrane segment spans residues 133–153; it reads AFFIFYLFHILLIEFLAWCTL. H154 is a topological domain (lumenal). The chain crosses the membrane as a helical span at residues 155 to 175; that stretch reads YLGTGWIPAIITVLLLTISQA. The Cytoplasmic segment spans residues 176–265; that stretch reads QAGWLQHDFG…IKYLPYNHQH (90 aa). Positions 182-186 match the Histidine box-1 motif; that stretch reads HDFGH. A Histidine box-2 motif is present at residues 219 to 223; it reads HFQHH. A helical transmembrane segment spans residues 266-286; it reads LYFFLIGPPLLIPVYFTVQII. Topologically, residues 287–307 are lumenal; it reads KTMIARKDWVDLAWSVSYYVR. The helical transmembrane segment at 308–328 threads the bilayer; it reads FFFTFVPFFGVLGSLALLNAV. Residues 329–446 lie on the Cytoplasmic side of the membrane; the sequence is RFFESHWFVW…QLWLDAYLHK (118 aa). The Histidine box-3 motif lies at 384–388; it reads QIEHH.

Belongs to the fatty acid desaturase type 1 family.

Its subcellular location is the endoplasmic reticulum membrane. It participates in lipid metabolism; polyunsaturated fatty acid biosynthesis. Functionally, component of a lipid metabolic pathway that catalyzes biosynthesis of highly unsaturated fatty acids (HUFA) from precursor essential polyunsaturated fatty acids (PUFA) linoleic acid (LA) (18:2n-6) and alpha-linolenic acid (ALA) (18:3n-3). Catalyzes the first and rate limiting step in this pathway which is the desaturation of LA (18:2n-6) and ALA (18:3n-3) into gamma-linoleic acid (GLA) (18:3n-6) and stearidonic acid (18:4n-3) respectively and other desaturation steps. Highly unsaturated fatty acids (HUFA) play pivotal roles in many biological functions. In Xenopus laevis (African clawed frog), this protein is Fatty acid desaturase 2 (fads2).